An 824-amino-acid chain; its full sequence is Translation initiation factor IF-2 (824 aa).

The segment at 1–234 is disordered; it reads MSDQDGKKPL…RQKAMGGSVD (234 aa). Composition is skewed to basic and acidic residues over residues 59–75 and 82–144; these read GGKR…DRRL and KARE…RRNA. The span at 145 to 159 shows a compositional bias: low complexity; sequence PPEAAAPAVDPAAAA. Basic and acidic residues predominate over residues 170–186; that stretch reads ARREPERDNKRENRSRG. Positions 321–491 constitute a tr-type G domain; the sequence is PRPPVITIMG…ALQAELLELK (171 aa). The segment at 330–337 is G1; the sequence is GHVDHGKT. 330–337 lines the GTP pocket; that stretch reads GHVDHGKT. Positions 355 to 359 are G2; it reads GITQH. A G3 region spans residues 377-380; it reads DTPG. GTP is bound by residues 377–381 and 431–434; these read DTPGH and NKID. A G4 region spans residues 431 to 434; sequence NKID. Positions 467–469 are G5; it reads SAM.

Belongs to the TRAFAC class translation factor GTPase superfamily. Classic translation factor GTPase family. IF-2 subfamily.

It is found in the cytoplasm. Functionally, one of the essential components for the initiation of protein synthesis. Protects formylmethionyl-tRNA from spontaneous hydrolysis and promotes its binding to the 30S ribosomal subunits. Also involved in the hydrolysis of GTP during the formation of the 70S ribosomal complex. The protein is Translation initiation factor IF-2 of Jannaschia sp. (strain CCS1).